Reading from the N-terminus, the 507-residue chain is uncharacterized protein (507 aa).

14 helical membrane-spanning segments follow: residues 8–28 (VKGV…AYLV), 41–61 (VGLF…RAFG), 86–106 (IVFV…LVVI), 130–150 (INIL…VAFF), 171–191 (ILSV…HNAY), 193–213 (PSVS…YIVV), 235–255 (LFSY…LGYL), 275–295 (VAMP…AVLF), 323–343 (IIVT…INIL), 355–375 (IQIL…FNIL), 387–407 (ILYI…PKFG), 408–428 (IIGA…FQIW), 444–464 (ILVI…KDLI), and 467–487 (VILQ…LGIF).

Belongs to the polysaccharide synthase family.

Its subcellular location is the cell membrane. This is an uncharacterized protein from Methanocaldococcus jannaschii (strain ATCC 43067 / DSM 2661 / JAL-1 / JCM 10045 / NBRC 100440) (Methanococcus jannaschii).